A 119-amino-acid chain; its full sequence is Large ribosomal subunit protein bL20 (119 aa).

This sequence belongs to the bacterial ribosomal protein bL20 family.

Functionally, binds directly to 23S ribosomal RNA and is necessary for the in vitro assembly process of the 50S ribosomal subunit. It is not involved in the protein synthesizing functions of that subunit. The sequence is that of Large ribosomal subunit protein bL20 from Caldicellulosiruptor bescii (strain ATCC BAA-1888 / DSM 6725 / KCTC 15123 / Z-1320) (Anaerocellum thermophilum).